Consider the following 828-residue polypeptide: Periplasmic nitrate reductase (828 aa).

Positions 1-31 (MKLSRRSFMKANAVAAAAAAAGLSVPGVARA) form a signal peptide, tat-type signal. In terms of domain architecture, 4Fe-4S Mo/W bis-MGD-type spans 39–95 (IKWDKAPCRFCGTGCGVLVGTQQGRVVACQGDPDAPVNRGLNCIKGYFLPKIMYGKD). 4 residues coordinate [4Fe-4S] cluster: Cys46, Cys49, Cys53, and Cys81. Mo-bis(molybdopterin guanine dinucleotide) contacts are provided by residues Lys83, Gln150, Asn175, Cys179, 212-219 (WGANMAEM), 243-247 (STYQH), 262-264 (QSD), Met372, Gln376, Asn482, 508-509 (SD), Lys531, Asp558, and 718-727 (TGRVLEHWHT). Substrate is bound at residue Phe794. Residues Asn802 and Lys819 each coordinate Mo-bis(molybdopterin guanine dinucleotide).

It belongs to the prokaryotic molybdopterin-containing oxidoreductase family. NasA/NapA/NarB subfamily. Component of the periplasmic nitrate reductase NapAB complex composed of NapA and NapB. [4Fe-4S] cluster serves as cofactor. The cofactor is Mo-bis(molybdopterin guanine dinucleotide). Predicted to be exported by the Tat system. The position of the signal peptide cleavage has not been experimentally proven.

Its subcellular location is the periplasm. The catalysed reaction is 2 Fe(II)-[cytochrome] + nitrate + 2 H(+) = 2 Fe(III)-[cytochrome] + nitrite + H2O. In terms of biological role, catalytic subunit of the periplasmic nitrate reductase complex NapAB. Receives electrons from NapB and catalyzes the reduction of nitrate to nitrite. This Escherichia coli O7:K1 (strain IAI39 / ExPEC) protein is Periplasmic nitrate reductase.